Reading from the N-terminus, the 889-residue chain is Putative receptor-like protein kinase At3g46340 (889 aa).

The signal sequence occupies residues 1–25 (MEFPHSVLLVVLIIATFAISNLVQA). Topologically, residues 26 to 514 (EEDQEGFISL…VITKKKFPVM (489 aa)) are extracellular. Residues Asn185, Asn239, Asn259, Asn292, Asn316, Asn342, Asn366, Asn419, Asn435, Asn448, Asn467, and Asn474 are each glycosylated (N-linked (GlcNAc...) asparagine). LRR repeat units follow at residues 414 to 437 (RITS…QNLT), 438 to 460 (HLDK…LASM), and 462 to 483 (SLSF…ALLK). A helical transmembrane segment spans residues 515-535 (IVALVSSAVVVILVVLVLIFV). At 536-889 (FKKKKPSNLE…FDTKAVPSAR (354 aa)) the chain is on the cytoplasmic side. The segment at 544–566 (LEDLPPSSNTPRENITSTSISDT) is disordered. Positions 585-874 (KNLQRPLGEG…TQGMDSHSSF (290 aa)) constitute a Protein kinase domain. ATP is bound by residues 591 to 599 (LGEGGFGVV) and Lys614. Tyr659 is modified (phosphotyrosine). Asp711 acts as the Proton acceptor in catalysis. At Ser745 the chain carries Phosphoserine. A phosphothreonine mark is found at Thr746 and Thr751. Tyr759 bears the Phosphotyrosine mark. The disordered stretch occupies residues 863 to 889 (NKTQGMDSHSSFEQSMSFDTKAVPSAR). The segment covering 864 to 880 (KTQGMDSHSSFEQSMSF) has biased composition (polar residues).

It belongs to the protein kinase superfamily. Ser/Thr protein kinase family.

The protein localises to the cell membrane. The catalysed reaction is L-seryl-[protein] + ATP = O-phospho-L-seryl-[protein] + ADP + H(+). The enzyme catalyses L-threonyl-[protein] + ATP = O-phospho-L-threonyl-[protein] + ADP + H(+). In Arabidopsis thaliana (Mouse-ear cress), this protein is Putative receptor-like protein kinase At3g46340.